Consider the following 229-residue polypeptide: PKHD-type hydroxylase BRADO4652 (229 aa).

The 103-residue stretch at 78–180 folds into the Fe2OG dioxygenase domain; it reads QIFPPLFNRY…RVASFFWMQS (103 aa). Residues His-98, Asp-100, and His-161 each contribute to the Fe cation site. Arg-171 provides a ligand contact to 2-oxoglutarate.

The cofactor is Fe(2+). Requires L-ascorbate as cofactor.

This Bradyrhizobium sp. (strain ORS 278) protein is PKHD-type hydroxylase BRADO4652.